A 770-amino-acid polypeptide reads, in one-letter code: MNNPSETNKSSMESEDASTGTQTNGLDFQKQPVPVGGAISTAQAQAFLGHLHQVQLAGTSLQAAAQSLNVQSKSSEESGDSQQSSQPSSQPPSVQSAIPQTQLMLAGGQITGLTLTPAQQQLLLQQAQAQAQLLAAAVQQHSASQQHSAAGATISASAATPMTQIPLSQPIQIAQDLQQLQQLQQQNLNLQQFVLVHPTTNLQPAQFIISQTPQGQQGLLQAQNLLTQLPQQSQANLLQPQPSITLTSQPTTPTRTIAAASVQTLPQSQSTPKRIDTPSLEEPSDLEELEQFAKTFKQRRIKLGFTQGDVGLAMGKLYGNDFSQTTISRFEALNLSFKNMCKLKPLLEKWLNDAENLSSDSTASSPSALNSPGLGAEGLNRRRKKRTSIETNIRVALEKSFMENQKPTSEDITLIAEQLNMEKEVIRVWFCNRRQKEKRINPPSSGGTSSSPIKAIFPSPASLVATTPSLVTSSTATTLTVNPVLPLTSAAVTNLSLTDQDLRRGCSWEVLRSLPDRVTTTAGTTDSTSNNNTATVISTAPPASSAVTSPSLSPSPSASASTSEASSASETNTTQTTSTPLPSPLGASQVMVTTPGLQTAAAALQGAAQLPANASLAAMAAAAGLSPGLMAPSQFAAGGALLSLSPGTLGSALSPALMSNSTLATIQALASSGSLPITSLDATGNLVFANAGGAPNIVTAPLFLNPQNLSLLTSNPVSLVSAAAASTGNSAPTASLHASSTSTESIQSSLFTVASASGPASTTTAASKAQ.

Over residues 1–26 (MNNPSETNKSSMESEDASTGTQTNGL) the composition is skewed to polar residues. Disordered regions lie at residues 1 to 33 (MNNP…KQPV), 68 to 97 (LNVQ…VQSA), 262 to 285 (VQTL…EPSD), and 357 to 385 (LSSD…RRKK). Low complexity predominate over residues 80 to 97 (DSQQSSQPSSQPPSVQSA). Over residues 262–272 (VQTLPQSQSTP) the composition is skewed to polar residues. Phosphothreonine is present on residues Thr271 and Thr277. Positions 281 to 355 (EEPSDLEELE…LLEKWLNDAE (75 aa)) constitute a POU-specific domain. Residue Ser284 is modified to Phosphoserine. Over residues 357–372 (LSSDSTASSPSALNSP) the composition is skewed to low complexity. A DNA-binding region (homeobox) is located at residues 382–441 (RRKKRTSIETNIRVALEKSFMENQKPTSEDITLIAEQLNMEKEVIRVWFCNRRQKEKRIN). Phosphoserine occurs at positions 388 and 451. Low complexity predominate over residues 519-580 (TTTAGTTDST…TNTTQTTSTP (62 aa)). Residues 519–589 (TTTAGTTDST…PLPSPLGASQ (71 aa)) are disordered.

Belongs to the POU transcription factor family. Class-2 subfamily. Interacts with POU2AF1; the interaction increases POU2F1 transactivation activity. Interacts with NR3C1, AR, PGR and HCFC1. Post-translationally, phosphorylated by PRKDC. Ubiquitously expressed. However, isoforms 4 and 5 are only expressed in lymphocytes.

Its subcellular location is the nucleus. Its function is as follows. Transcription factor that binds to the octamer motif (5'-ATTTGCAT-3') and activates the promoters of the genes for some small nuclear RNAs (snRNA) and of genes such as those for histone H2B and immunoglobulins. Modulates transcription transactivation by NR3C1, AR and PGR. This is POU domain, class 2, transcription factor 1 (Pou2f1) from Mus musculus (Mouse).